The chain runs to 312 residues: Ribonuclease Z (312 aa).

7 residues coordinate Zn(2+): histidine 62, histidine 64, aspartate 66, histidine 67, histidine 144, aspartate 215, and histidine 273. The active-site Proton acceptor is aspartate 66.

It belongs to the RNase Z family. Homodimer. The cofactor is Zn(2+).

The catalysed reaction is Endonucleolytic cleavage of RNA, removing extra 3' nucleotides from tRNA precursor, generating 3' termini of tRNAs. A 3'-hydroxy group is left at the tRNA terminus and a 5'-phosphoryl group is left at the trailer molecule.. Zinc phosphodiesterase, which displays some tRNA 3'-processing endonuclease activity. Probably involved in tRNA maturation, by removing a 3'-trailer from precursor tRNA. The chain is Ribonuclease Z from Prochlorococcus marinus subsp. pastoris (strain CCMP1986 / NIES-2087 / MED4).